We begin with the raw amino-acid sequence, 514 residues long: Probable peptidoglycan glycosyltransferase FtsW (514 aa).

Helical transmembrane passes span 45 to 65 (IGLIIVALALMTIGIIIVTSA), 86 to 106 (IYIVGAIIAAMVVLELPMQFW), 108 to 128 (TANPYLLLAAIGLLVAVLLVG), 137 to 157 (WLALGPITIQAAEPAKLFFFT), 182 to 202 (VVFFALAMLLLLQPDLGTVVV), 218 to 238 (LWQFFALVFAGVLAVVALIVF), 301 to 321 (ILAEELGFVGVLAVLGLILWM), 347 to 367 (VGIWFSFQTAVNIGASAGILP), and 373 to 393 (LPLVSYGGSSLIVMSVAVALL). 2 disordered regions span residues 411–437 (GDNKRTSKAKAKPSAKSAAKPAVRTKH) and 449–501 (DYNQ…AGIK).

This sequence belongs to the SEDS family. FtsW subfamily.

The protein localises to the cell inner membrane. The catalysed reaction is [GlcNAc-(1-&gt;4)-Mur2Ac(oyl-L-Ala-gamma-D-Glu-L-Lys-D-Ala-D-Ala)](n)-di-trans,octa-cis-undecaprenyl diphosphate + beta-D-GlcNAc-(1-&gt;4)-Mur2Ac(oyl-L-Ala-gamma-D-Glu-L-Lys-D-Ala-D-Ala)-di-trans,octa-cis-undecaprenyl diphosphate = [GlcNAc-(1-&gt;4)-Mur2Ac(oyl-L-Ala-gamma-D-Glu-L-Lys-D-Ala-D-Ala)](n+1)-di-trans,octa-cis-undecaprenyl diphosphate + di-trans,octa-cis-undecaprenyl diphosphate + H(+). It participates in cell wall biogenesis; peptidoglycan biosynthesis. Functionally, peptidoglycan polymerase that is essential for cell division. This Alteromonas naphthalenivorans protein is Probable peptidoglycan glycosyltransferase FtsW.